The sequence spans 378 residues: Ribosomal RNA large subunit methyltransferase G (378 aa).

The protein belongs to the methyltransferase superfamily. RlmG family.

It is found in the cytoplasm. The enzyme catalyses guanosine(1835) in 23S rRNA + S-adenosyl-L-methionine = N(2)-methylguanosine(1835) in 23S rRNA + S-adenosyl-L-homocysteine + H(+). Functionally, specifically methylates the guanine in position 1835 (m2G1835) of 23S rRNA. The protein is Ribosomal RNA large subunit methyltransferase G of Shigella flexneri.